Here is a 384-residue protein sequence, read N- to C-terminus: Interstitial collagenase (384 aa).

The signal sequence occupies residues 1–25; sequence MLSGLWSSILALLGVFLQSVGEFRA. The propeptide at 26-88 is activation peptide; the sequence is ETQEQDVEIV…STCGVPDVGE (63 aa). Residues 79–86 carry the Cysteine switch motif; that stretch reads STCGVPDV. Cysteine 81 lines the Zn(2+) pocket. Ca(2+)-binding residues include aspartate 113 and aspartate 129. Zn(2+) contacts are provided by histidine 139 and aspartate 141. Residues aspartate 146, glycine 147, glycine 149, and asparagine 151 each coordinate Ca(2+). Histidine 154 contributes to the Zn(2+) binding site. 3 residues coordinate Ca(2+): glycine 161, glycine 163, and aspartate 165. A Zn(2+)-binding site is contributed by histidine 167. Positions 169, 170, and 172 each coordinate Ca(2+). Histidine 189 contributes to the Zn(2+) binding site. Glutamate 190 is a catalytic residue. Histidine 193 and histidine 199 together coordinate Zn(2+). The interval 218 to 239 is disordered; it reads LSQDDIDGPSGNPVQPRGPQTP. Cysteine 242 and cysteine 381 are joined by a disulfide. Ca(2+)-binding residues include aspartate 249, glutamine 277, and aspartate 347. Hemopexin repeat units follow at residues 273-319 and 333-381; these read ELGL…FGFP and KQSM…WFNC.

Belongs to the peptidase M10A family. The cofactor is Ca(2+). It depends on Zn(2+) as a cofactor.

It localises to the secreted. It is found in the extracellular space. The protein resides in the extracellular matrix. It catalyses the reaction Cleavage of the triple helix of collagen at about three-quarters of the length of the molecule from the N-terminus, at 775-Gly-|-Ile-776 in the alpha1(I) chain. Cleaves synthetic substrates and alpha-macroglobulins at bonds where P1' is a hydrophobic residue.. Can be activated without removal of the activation peptide. Cleaves collagens of types I, II, and III at one site in the helical domain. Also cleaves collagens of types VII and X. The polypeptide is Interstitial collagenase (Aquarana catesbeiana (American bullfrog)).